The chain runs to 64 residues: Prokaryotic ubiquitin-like protein Pup (64 aa).

Composition is skewed to basic and acidic residues over residues 1 to 11 (MAQEQTKRTGG) and 25 to 34 (GQERREKLAE). Residues 1-38 (MAQEQTKRTGGGDEDEGSAGPEAAGQERREKLAEDTDD) form a disordered region. Positions 21-58 (PEAAGQERREKLAEDTDDLLDEIDDVLEENAEDFVRAY) are ARC ATPase binding. The stretch at 24–52 (AGQERREKLAEDTDDLLDEIDDVLEENAE) forms a coiled coil. Q64 carries the deamidated glutamine modification. An Isoglutamyl lysine isopeptide (Gln-Lys) (interchain with K-? in acceptor proteins) cross-link involves residue Q64.

Belongs to the prokaryotic ubiquitin-like protein family. Strongly interacts with the proteasome-associated ATPase ARC through a hydrophobic interface; the interacting region of Pup lies in its C-terminal half. There is one Pup binding site per ARC hexamer ring. Post-translationally, is modified by deamidation of its C-terminal glutamine to glutamate by the deamidase Dop, a prerequisite to the subsequent pupylation process.

It participates in protein degradation; proteasomal Pup-dependent pathway. Functionally, protein modifier that is covalently attached to lysine residues of substrate proteins, thereby targeting them for proteasomal degradation. The tagging system is termed pupylation. The sequence is that of Prokaryotic ubiquitin-like protein Pup from Nocardia farcinica (strain IFM 10152).